Here is a 410-residue protein sequence, read N- to C-terminus: Lissencephaly-1 homolog B (410 aa).

The LisH domain occupies 7–39 (QRDELNRAIADYLRSNGYEEAYSTFKKEAELDV). Residues 56-82 (TSVIRLQKKVMELESKLNEAKEEITLG) adopt a coiled-coil conformation. WD repeat units lie at residues 106 to 147 (GHRS…RTLK), 148 to 187 (GHTD…CIRT), 190 to 229 (GHDH…CVKT), 232 to 271 (GHRE…CKAE), 274 to 333 (EHEH…CLMT), 336 to 377 (GHDN…KTLS), and 379 to 410 (HEHF…WECR).

It belongs to the WD repeat LIS1/nudF family. As to quaternary structure, can self-associate. Component of the cytosolic PAF-AH (I) heterotetrameric enzyme, which is composed of PAFAH1B1 (beta), PAFAH1B2 (alpha2) and PAFAH1B3 (alpha1) subunits. The catalytic activity of the enzyme resides in the alpha1 (PAFAH1B3) and alpha2 (PAFAH1B2) subunits, whereas the beta subunit (PAFAH1B1) has regulatory activity. Trimer formation is not essential for the catalytic activity. Interacts with dynein, dynactin, nde1 and ndel1. In terms of tissue distribution, enriched in the photoreceptor cell layer.

It localises to the cytoplasm. The protein localises to the cytoskeleton. It is found in the microtubule organizing center. Its subcellular location is the centrosome. In terms of biological role, regulatory subunit (beta subunit) of the cytosolic type I platelet-activating factor (PAF) acetylhydrolase (PAF-AH (I)), an enzyme that catalyzes the hydrolyze of the acetyl group at the sn-2 position of PAF and its analogs and participates in the PAF inactivation. Regulates the PAF-AH (I) activity in a catalytic dimer composition-dependent manner. Positively regulates the activity of the minus-end directed microtubule motor protein dynein. May enhance dynein-mediated microtubule sliding by targeting dynein to the microtubule plus end. Required for several dynein- and microtubule-dependent processes such as the maintenance of Golgi integrity, the peripheral transport of microtubule fragments and the coupling of the nucleus and centrosome. May be required for proliferation of neuronal precursors and neuronal migration. Involved in the positioning of nuclei in photoreceptor cells. The sequence is that of Lissencephaly-1 homolog B (pafah1b1b) from Danio rerio (Zebrafish).